A 57-amino-acid chain; its full sequence is uncharacterized protein (57 aa).

Positions 34-57 are disordered; it reads QGKRGETEGQIEISRKAGHPAPAF.

This is an uncharacterized protein from Saccharomyces cerevisiae (strain ATCC 204508 / S288c) (Baker's yeast).